A 512-amino-acid chain; its full sequence is Tyrosine decarboxylase (512 aa).

3 residues coordinate L-tyrosine: Pro100, His205, and His320. Lys321 is subject to N6-(pyridoxal phosphate)lysine. Position 350 (Tyr350) interacts with L-tyrosine.

This sequence belongs to the group II decarboxylase family. In terms of assembly, homodimer. The cofactor is pyridoxal 5'-phosphate. Mainly expressed in roots, stems and capsule walls.

The catalysed reaction is L-tyrosine + H(+) = tyramine + CO2. Functionally, tyrosine decarboxylase that converts tyrosine into tyramine, a precursor of isoquinoline alkaloids and various amides. The protein is Tyrosine decarboxylase of Papaver somniferum (Opium poppy).